Consider the following 1274-residue polypeptide: Myosin-1 (1274 aa).

Residues Met1 to Lys28 form a disordered region. One can recognise a Myosin motor domain in the interval Ala41–Asp721. Gly134–Thr141 contributes to the ATP binding site. Ser363 carries the post-translational modification Phosphoserine. An actin-binding region spans residues Val410 to Ala492. IQ domains follow at residues His725–Ala745 and Ala746–Gln771. Residues Arg779–Pro969 enclose the TH1 domain. Disordered stretches follow at residues Arg951 to Thr1029, Ala1042 to Phe1071, and Pro1116 to Gln1248. The span at Lys957 to Asn974 shows a compositional bias: polar residues. The span at Ala1042–Ala1053 shows a compositional bias: low complexity. 2 stretches are compositionally biased toward pro residues: residues Ala1054–Pro1067 and Ala1126–Arg1138. Residues Pro1067–Gln1125 enclose the SH3 domain. 2 stretches are compositionally biased toward low complexity: residues Pro1139–Thr1157 and Ala1170–Lys1226.

The protein belongs to the TRAFAC class myosin-kinesin ATPase superfamily. Myosin family. Post-translationally, phosphorylation of the TEDS site (Ser-363) is required for the polarization of the actin cytoskeleton. Phosphorylation probably activates the myosin-I ATPase activity.

It localises to the cytoplasm. Its subcellular location is the cytoskeleton. The protein localises to the actin patch. In terms of biological role, type-I myosin implicated in the organization of the actin cytoskeleton. Required for proper actin cytoskeleton polarization. At the cell cortex, assembles in patch-like structures together with proteins from the actin-polymerizing machinery and promotes actin assembly. Functions as actin nucleation-promoting factor (NPF) for the Arp2/3 complex. The polypeptide is Myosin-1 (MYO1) (Cryptococcus neoformans var. neoformans serotype D (strain B-3501A) (Filobasidiella neoformans)).